We begin with the raw amino-acid sequence, 506 residues long: Ecdysteroid UDP-glucosyltransferase (506 aa).

The signal sequence occupies residues 1–18 (MTILCWLALLSTLTAVNA).

It belongs to the UDP-glycosyltransferase family. Post-translationally, glycosylated.

Its function is as follows. Catalyzes the transfer of glucose from UDP-glucose to ecdysteroids which are insect molting hormones. Acts on the host at the organismal level to block its development, thereby increasing the yield of progeny virus. This chain is Ecdysteroid UDP-glucosyltransferase (EGT), found in Lepidoptera (butterflies and moths).